The following is a 606-amino-acid chain: Zinc finger protein 214 (606 aa).

The 81-residue stretch at Val3–Tyr83 folds into the KRAB domain. The segment at Tyr275–His297 adopts a C2H2-type 1; degenerate zinc-finger fold. The C2H2-type 2 zinc-finger motif lies at Tyr303–His325. A C2H2-type 3; degenerate zinc finger spans residues Phe330 to His352. 8 C2H2-type zinc fingers span residues Phe358–His380, Tyr386–His408, Tyr414–His436, Tyr442–His464, Tyr470–His492, Tyr498–His520, Tyr526–His548, and Tyr554–His576.

It belongs to the krueppel C2H2-type zinc-finger protein family.

It is found in the nucleus. In terms of biological role, may be involved in transcriptional regulation. The protein is Zinc finger protein 214 (ZNF214) of Homo sapiens (Human).